The following is a 92-amino-acid chain: Isoleucine--tRNA ligase (92 aa).

4 residues coordinate Zn(2+): C55, C58, C75, and C78.

It belongs to the class-I aminoacyl-tRNA synthetase family. IleS type 1 subfamily. In terms of assembly, monomer. It depends on Zn(2+) as a cofactor.

It localises to the cytoplasm. It carries out the reaction tRNA(Ile) + L-isoleucine + ATP = L-isoleucyl-tRNA(Ile) + AMP + diphosphate. Functionally, catalyzes the attachment of isoleucine to tRNA(Ile). As IleRS can inadvertently accommodate and process structurally similar amino acids such as valine, to avoid such errors it has two additional distinct tRNA(Ile)-dependent editing activities. One activity is designated as 'pretransfer' editing and involves the hydrolysis of activated Val-AMP. The other activity is designated 'posttransfer' editing and involves deacylation of mischarged Val-tRNA(Ile). This chain is Isoleucine--tRNA ligase (ileS), found in Klebsiella aerogenes (Enterobacter aerogenes).